A 117-amino-acid polypeptide reads, in one-letter code: Large ribosomal subunit protein uL18 (117 aa).

Belongs to the universal ribosomal protein uL18 family. Part of the 50S ribosomal subunit; part of the 5S rRNA/L5/L18/L25 subcomplex. Contacts the 5S and 23S rRNAs.

This is one of the proteins that bind and probably mediate the attachment of the 5S RNA into the large ribosomal subunit, where it forms part of the central protuberance. This Pasteurella multocida (strain Pm70) protein is Large ribosomal subunit protein uL18.